The chain runs to 127 residues: Large ribosomal subunit protein bL20 (127 aa).

It belongs to the bacterial ribosomal protein bL20 family.

In terms of biological role, binds directly to 23S ribosomal RNA and is necessary for the in vitro assembly process of the 50S ribosomal subunit. It is not involved in the protein synthesizing functions of that subunit. This chain is Large ribosomal subunit protein bL20, found in Opitutus terrae (strain DSM 11246 / JCM 15787 / PB90-1).